The chain runs to 339 residues: MTVREPLRPVLYDDARDLVRLLDQKALPAEERWLELSTADAVAAAIRDLTVRGAPAIGVAAAYALAVEARRGAGPERLRAAADLLARARPTAVNLAWAVRRMSARLGAPAADVLAEAHAIRDEDEAACRRIGALGAPLVPARARVLTHCNAGALATAGYGTALGVVRAAVESGNAISVFADETRPFLQGARLTAWELHRDGIPVTLLTDGMAGWLMARGEIGCVVVGADRIAANGDVANKIGTYALAVLAAHHRLPFYVAAPWSTVDLATPTGADIPIEERGADEVVMLAGQRIAPAGVPARYPAFDVTPAALVTAIVTERGVVRAPHAAGLATLASAR.

Substrate-binding positions include 52 to 54 (RGA), R89, and Q188. The active-site Proton donor is D229. 239-240 (NK) provides a ligand contact to substrate.

It belongs to the eIF-2B alpha/beta/delta subunits family. MtnA subfamily.

It carries out the reaction 5-(methylsulfanyl)-alpha-D-ribose 1-phosphate = 5-(methylsulfanyl)-D-ribulose 1-phosphate. It participates in amino-acid biosynthesis; L-methionine biosynthesis via salvage pathway; L-methionine from S-methyl-5-thio-alpha-D-ribose 1-phosphate: step 1/6. Its function is as follows. Catalyzes the interconversion of methylthioribose-1-phosphate (MTR-1-P) into methylthioribulose-1-phosphate (MTRu-1-P). This is Methylthioribose-1-phosphate isomerase from Anaeromyxobacter sp. (strain K).